The sequence spans 380 residues: Cytochrome b (380 aa).

The next 4 helical transmembrane spans lie at 34–54 (FGSL…LLAM), 78–99 (WLIR…YMHI), 114–134 (WNTG…GYVL), and 179–199 (FFAL…IHLT). The heme b site is built by H84 and H98. Residues H183 and H197 each contribute to the heme b site. Residue H202 coordinates a ubiquinone. A run of 4 helical transmembrane segments spans residues 227 to 247 (SKDI…ALFS), 289 to 309 (LGGV…PFLH), 321 to 341 (LSQM…WIGS), and 348 to 368 (FIII…ILLP).

Belongs to the cytochrome b family. As to quaternary structure, the cytochrome bc1 complex contains 11 subunits: 3 respiratory subunits (MT-CYB, CYC1 and UQCRFS1), 2 core proteins (UQCRC1 and UQCRC2) and 6 low-molecular weight proteins (UQCRH/QCR6, UQCRB/QCR7, UQCRQ/QCR8, UQCR10/QCR9, UQCR11/QCR10 and a cleavage product of UQCRFS1). This cytochrome bc1 complex then forms a dimer. Heme b is required as a cofactor.

It localises to the mitochondrion inner membrane. Functionally, component of the ubiquinol-cytochrome c reductase complex (complex III or cytochrome b-c1 complex) that is part of the mitochondrial respiratory chain. The b-c1 complex mediates electron transfer from ubiquinol to cytochrome c. Contributes to the generation of a proton gradient across the mitochondrial membrane that is then used for ATP synthesis. The polypeptide is Cytochrome b (MT-CYB) (Caracara plancus (Southern caracara)).